The sequence spans 345 residues: Mitochondrial metalloendopeptidase OMA1 (345 aa).

Residues 1–67 (MLRNIIRFKG…ILLDKSSRKY (67 aa)) are Mitochondrial matrix-facing. A helical transmembrane segment spans residues 68–88 (LALLFGGCSLFYYTHLDKAPV). Residues 89–345 (SDRSRFIWVS…GNYYKSFFSM (257 aa)) lie on the Mitochondrial intermembrane side of the membrane. His203 provides a ligand contact to Zn(2+). Glu204 is an active-site residue. The Zn(2+) site is built by His207 and Glu257. Residues Cys272 and Cys332 are joined by a disulfide bond. The interval 314–345 (ENMSKWLPKANEIYEQSDCSSMGNYYKSFFSM) is required for protease activation.

Belongs to the peptidase M48 family. As to quaternary structure, homooligomer. Requires Zn(2+) as cofactor. Forms a redox-dependent disulfide bond, which plays a structural role and regulates its conformational stability and activity.

Its subcellular location is the mitochondrion inner membrane. Its activity is regulated as follows. Protease activity is induced in response to various mitochondrial stress, such as changes in membrane potential, oxidative stress or chronic hyperpolarization, and depends on its C-terminal region. Functionally, protease that is part of the quality control system in the inner membrane of mitochondria. Activated in response to various mitochondrial stress, leading to the proteolytic cleavage of target proteins, such as OXA1 and COX1. Cleaves and thereby promotes the turnover of mistranslated or misfolded membrane proteins. Cleaves the misfolded multi-pass membrane protein OXA1. Involved in quality control of cytochrome oxidase assembly: mediates the cleavage of COX1 in cells lacking COA2. Required for the stability of the respiratory supercomplexes. Required for TOR signaling. In Saccharomyces cerevisiae (strain ATCC 204508 / S288c) (Baker's yeast), this protein is Mitochondrial metalloendopeptidase OMA1.